A 158-amino-acid chain; its full sequence is Disease resistance response protein Pi49 (158 aa).

The protein belongs to the BetVI family.

This chain is Disease resistance response protein Pi49 (DRR49A), found in Pisum sativum (Garden pea).